The following is a 405-amino-acid chain: Envelope glycoprotein M (405 aa).

Residues 1–17 (MKSSKNDTFVYRTWVKT) are Intravirion-facing. The helical transmembrane segment at 18–38 (LVVYFVMFVMSAVVPITAMFP) threads the bilayer. Residues 39–76 (NLGYPCYFNALVDYGALNLTNYNLAHHLTPTLYLEPPE) lie on the Virion surface side of the membrane. A helical membrane pass occupies residues 77–97 (MFVYITLVFIADCVAFIYYAC). Over 98–121 (GEVALIKARKKVSGLTDLSAWVSA) the chain is Intravirion. A helical membrane pass occupies residues 122–142 (VGSPTVLFLAILKLWSIQVFI). Topologically, residues 143–149 (QVLSYKH) are virion surface. Residues 150–170 (VFLSAFVYFLHFLASVLHACA) traverse the membrane as a helical segment. Topologically, residues 171–192 (CVTRFSPVWVVKAQDNSIPQDT) are intravirion. The helical transmembrane segment at 193–215 (FLWWVVFYLKPVVTNLYLGCLAL) threads the bilayer. Residues 216 to 245 (ETLVFSLSVFLALGNSFYFMVGDMVLGAVN) lie on the Virion surface side of the membrane. Residues 246–266 (LFLILPIFWYILTEVWLASFM) traverse the membrane as a helical segment. Arginine 267 is a topological domain (intravirion). A helical membrane pass occupies residues 268-288 (HNFGFYCGMFIASIILILPLV). The Virion surface segment spans residues 289–299 (RYEAVFVSAKL). Residues 300–320 (HTTVAINVAIIPILCSVAMLI) traverse the membrane as a helical segment. Topologically, residues 321–405 (RICRIFKSMR…TTDSEEEIFP (85 aa)) are intravirion. The segment at 346–405 (LESEPRPRPSRTPSPGRNRRRSSTSSSSSRSTRRQRPVSTQALVSSVLPMTTDSEEEIFP) is disordered. Polar residues predominate over residues 386–397 (QALVSSVLPMTT).

Belongs to the herpesviridae glycoprotein M family. As to quaternary structure, interacts (via N-terminus) with gN (via N-terminus). The gM-gN heterodimer forms the gCII complex.

The protein resides in the virion membrane. It is found in the host Golgi apparatus. The protein localises to the host trans-Golgi network. It localises to the host endosome membrane. Its subcellular location is the host nucleus inner membrane. Functionally, envelope glycoprotein important for virion assembly and egress. Plays a role in the correct incorporation of gH-gL into virion membrane. Directs the glycoprotein N (gN) to the host trans-Golgi network. The chain is Envelope glycoprotein M from Epstein-Barr virus (strain GD1) (HHV-4).